The sequence spans 46 residues: Protein YpdJ (46 aa).

Its function is as follows. May be involved in H(2) production during fermentative growth. This Escherichia coli (strain K12) protein is Protein YpdJ (ypdJ).